An 824-amino-acid chain; its full sequence is Ras guanine nucleotide exchange factor I (824 aa).

2 disordered regions span residues 1–51 and 65–167; these read MSNP…KPTK and GSNL…LILD. Residues 8-41 are compositionally biased toward low complexity; that stretch reads SNSTNGSSNSLNGESVSPNRLGSSPGSPISKASS. A compositionally biased stretch (polar residues) spans 83-95; it reads NSSVGLLNNSTGS. Over residues 104 to 116 the composition is skewed to low complexity; it reads SSPKSSYILSSSI. The segment covering 117-128 has biased composition (gly residues); sequence GSGGSGGGGGSS. Low complexity predominate over residues 136 to 167; the sequence is SASNNSSGPRSRSGSLGKNNSSQQNNNNLILD. In terms of domain architecture, LisH spans 223 to 255; it reads GRDNILQLILQHLQFEGLMDSRKILEEEAKIQY. Disordered regions lie at residues 330-354 and 398-425; these read YVDE…TTAT and NTQQ…STGT. Positions 331 to 341 are enriched in basic and acidic residues; it reads VDEKDNDKPSK. Residues 343–354 show a composition bias toward low complexity; the sequence is SPTTATTTTTAT. The segment covering 413 to 425 has biased composition (polar residues); sequence LKSTQSITGSTGT. The N-terminal Ras-GEF domain maps to 426–551; sequence LGPQVKAASL…VISDALNSGL (126 aa). A Ras-GEF domain is found at 585-816; the sequence is DEEEISRQLT…YTRSMSFEPR (232 aa).

Promotes the exchange of Ras-bound GDP by GTP. The protein is Ras guanine nucleotide exchange factor I (gefI) of Dictyostelium discoideum (Social amoeba).